The primary structure comprises 363 residues: tRNA N6-adenosine threonylcarbamoyltransferase (363 aa).

The Fe cation site is built by H121 and H125. Substrate-binding positions include 143 to 147 (LASGG), D176, G189, and N287. D315 lines the Fe cation pocket.

It belongs to the KAE1 / TsaD family. Fe(2+) serves as cofactor.

Its subcellular location is the cytoplasm. The catalysed reaction is L-threonylcarbamoyladenylate + adenosine(37) in tRNA = N(6)-L-threonylcarbamoyladenosine(37) in tRNA + AMP + H(+). Required for the formation of a threonylcarbamoyl group on adenosine at position 37 (t(6)A37) in tRNAs that read codons beginning with adenine. Is involved in the transfer of the threonylcarbamoyl moiety of threonylcarbamoyl-AMP (TC-AMP) to the N6 group of A37, together with TsaE and TsaB. TsaD likely plays a direct catalytic role in this reaction. In Rhodopseudomonas palustris (strain BisA53), this protein is tRNA N6-adenosine threonylcarbamoyltransferase.